We begin with the raw amino-acid sequence, 375 residues long: Growth/differentiation factor 8 (375 aa).

An N-terminal signal peptide occupies residues 1–23 (MQKLAVYVYIYLFMQILVHPVAL). Residues 24–266 (DGSSQPTENA…VTDTPKRSRR (243 aa)) constitute a propeptide that is removed on maturation. N71 carries N-linked (GlcNAc...) asparagine glycosylation. 4 disulfide bridges follow: C272–C282, C281–C340, C309–C372, and C313–C374.

This sequence belongs to the TGF-beta family. In terms of assembly, homodimer; disulfide-linked.

Its subcellular location is the secreted. In terms of biological role, acts specifically as a negative regulator of skeletal muscle growth. The sequence is that of Growth/differentiation factor 8 (MSTN) from Meleagris gallopavo (Wild turkey).